The chain runs to 258 residues: Small ribosomal subunit protein uS3 (258 aa).

One can recognise a KH type-2 domain in the interval 43 to 111 (IRKLMSTGLE…QVQLNILEVK (69 aa)). The interval 217–258 (AREQASAAPRARGRADRPRGRRDEGAAPQQAAAPAATTGTEA) is disordered. The segment covering 229–241 (GRADRPRGRRDEG) has biased composition (basic and acidic residues). Residues 242 to 258 (AAPQQAAAPAATTGTEA) are compositionally biased toward low complexity.

It belongs to the universal ribosomal protein uS3 family. In terms of assembly, part of the 30S ribosomal subunit. Forms a tight complex with proteins S10 and S14.

Functionally, binds the lower part of the 30S subunit head. Binds mRNA in the 70S ribosome, positioning it for translation. This chain is Small ribosomal subunit protein uS3, found in Beutenbergia cavernae (strain ATCC BAA-8 / DSM 12333 / CCUG 43141 / JCM 11478 / NBRC 16432 / NCIMB 13614 / HKI 0122).